The chain runs to 128 residues: SH2 domain-containing protein 1A (128 aa).

The SH2 domain occupies 6 to 102 (VYHGKISRET…GIVIPLQYPV (97 aa)). An interaction with FYN SH3 domain region spans residues 67–92 (ETAPGVHKRFFRKIKNLISAFQKPDQ). K89 bears the N6-acetyllysine mark. The tract at residues 104-128 (KKPSARSTQGATGRRDDPDVFLKTP) is disordered. Residues 116-128 (GRRDDPDVFLKTP) show a composition bias toward basic and acidic residues.

Interacts with CD84, CD244, LY9, SLAMF1 and FYN. Interacts with NTRK1, NTRK2 and NTRK3.

Its subcellular location is the cytoplasm. In terms of biological role, cytoplasmic adapter regulating receptors of the signaling lymphocytic activation molecule (SLAM) family such as SLAMF1, CD244, LY9, CD84, SLAMF6 and SLAMF7. In SLAM signaling seems to cooperate with SH2D1B/EAT-2. Initially it has been proposed that association with SLAMF1 prevents SLAMF1 binding to inhibitory effectors including INPP5D/SHIP1 and PTPN11/SHP-2. However, by simultaneous interactions, recruits FYN which subsequently phosphorylates and activates SLAMF1. Positively regulates CD244/2B4- and CD84-mediated natural killer (NK) cell functions. Can also promote CD48-, SLAMF6 -, LY9-, and SLAMF7-mediated NK cell activation. In the context of NK cell-mediated cytotoxicity enhances conjugate formation with target cells. May also regulate the activity of the neurotrophin receptors NTRK1, NTRK2 and NTRK3. The sequence is that of SH2 domain-containing protein 1A (SH2D1A) from Bos taurus (Bovine).